A 211-amino-acid chain; its full sequence is Tudor-interacting repair regulator protein (211 aa).

Glycyl lysine isopeptide (Lys-Gly) (interchain with G-Cter in ubiquitin) cross-links involve residues lysine 10 and lysine 151. Residues 118 to 205 (TLEQLHAVEI…TEKQKKALEK (88 aa)) are interaction with PXN.

This sequence belongs to the Nudix hydrolase family. TIRR subfamily. In terms of assembly, homodimer. Interacts with TP53BP1 (via the Tudor-like domain); interaction is abolished following DNA damage and TP53BP1 phosphorylation by ATM. Interacts (via the cytoplasmic part) with SDC4. Interacts with TGFB1I1 and PXN.

It is found in the nucleus. In terms of biological role, key regulator of TP53BP1 required to stabilize TP53BP1 and regulate its recruitment to chromatin. In absence of DNA damage, interacts with the tandem Tudor-like domain of TP53BP1, masking the region that binds histone H4 dimethylated at 'Lys-20' (H4K20me2), thereby preventing TP53BP1 recruitment to chromatin and maintaining TP53BP1 localization to the nucleus. Following DNA damage, ATM-induced phosphorylation of TP53BP1 and subsequent recruitment of RIF1 leads to dissociate NUDT16L1/TIRR from TP53BP1, unmasking the tandem Tudor-like domain and allowing recruitment of TP53BP1 to DNA double strand breaks (DSBs). Binds U8 snoRNA. The protein is Tudor-interacting repair regulator protein of Homo sapiens (Human).